The sequence spans 347 residues: Protein RecA (347 aa).

Residue 64 to 71 (GPESSGKT) participates in ATP binding.

This sequence belongs to the RecA family.

It localises to the cytoplasm. Functionally, can catalyze the hydrolysis of ATP in the presence of single-stranded DNA, the ATP-dependent uptake of single-stranded DNA by duplex DNA, and the ATP-dependent hybridization of homologous single-stranded DNAs. It interacts with LexA causing its activation and leading to its autocatalytic cleavage. The chain is Protein RecA from Bartonella henselae (strain ATCC 49882 / DSM 28221 / CCUG 30454 / Houston 1) (Rochalimaea henselae).